The chain runs to 356 residues: Chorismate synthase (356 aa).

NADP(+)-binding residues include R48 and R54. FMN contacts are provided by residues R125 to S127, N237 to A238, G281, K296 to S300, and R322.

Belongs to the chorismate synthase family. Homotetramer. It depends on FMNH2 as a cofactor.

It catalyses the reaction 5-O-(1-carboxyvinyl)-3-phosphoshikimate = chorismate + phosphate. It functions in the pathway metabolic intermediate biosynthesis; chorismate biosynthesis; chorismate from D-erythrose 4-phosphate and phosphoenolpyruvate: step 7/7. Catalyzes the anti-1,4-elimination of the C-3 phosphate and the C-6 proR hydrogen from 5-enolpyruvylshikimate-3-phosphate (EPSP) to yield chorismate, which is the branch point compound that serves as the starting substrate for the three terminal pathways of aromatic amino acid biosynthesis. This reaction introduces a second double bond into the aromatic ring system. The sequence is that of Chorismate synthase from Novosphingobium aromaticivorans (strain ATCC 700278 / DSM 12444 / CCUG 56034 / CIP 105152 / NBRC 16084 / F199).